The chain runs to 225 residues: MEASGSSSQSQDSGGVHRETEDHYQETELHKHHGKARERYKRDKSSSSSSSSSSSSSSSSSSSSSSSDSSDEDQPSRGPRKHRRRPRRDSLRGADHGELEVLKDELQLCGGAAGEMVPTGESGLRRRGSGSAEGEVEASQLRRLNIKKDDEFFHFVLLCFAIGALLVCYHYYADWFMSLGVGLLTFASLETIGIYFGLVYRIHSVLQGFIPLLQKFRLPGFRRTN.

Position 1 is an N-acetylmethionine (Met-1). Low complexity predominate over residues 1-14 (MEASGSSSQSQDSG). The segment at 1 to 96 (MEASGSSSQS…RRDSLRGADH (96 aa)) is disordered. Positions 15 to 29 (GVHRETEDHYQETEL) are enriched in basic and acidic residues. Positions 30–39 (HKHHGKARER) are enriched in basic residues. The span at 46-68 (SSSSSSSSSSSSSSSSSSSSSSD) shows a compositional bias: low complexity. Residues 78–87 (GPRKHRRRPR) show a composition bias toward basic residues. Phosphoserine is present on Ser-129. The next 2 helical transmembrane spans lie at 152–172 (FFHF…YHYY) and 179–199 (LGVG…FGLV).

Its subcellular location is the membrane. The polypeptide is Transmembrane protein 40 (Tmem40) (Mus musculus (Mouse)).